Here is a 175-residue protein sequence, read N- to C-terminus: O-acetyl-ADP-ribose deacetylase (175 aa).

One can recognise a Macro domain in the interval 1 to 175 (MAVQPEVILG…IYRRLLASYP (175 aa)). Substrate contacts are provided by residues 11–12 (DI), asparagine 25, 33–35 (GVD), and 122–126 (STGVY). The active-site Proton acceptor is the aspartate 35.

This sequence belongs to the MacroD-type family. YmdB subfamily. In terms of assembly, homodimer. Interacts with RNase III.

It carries out the reaction 3''-O-acetyl-ADP-D-ribose + H2O = ADP-D-ribose + acetate + H(+). The enzyme catalyses 2''-O-acetyl-ADP-D-ribose + H2O = ADP-D-ribose + acetate + H(+). Its function is as follows. Deacetylates O-acetyl-ADP ribose to yield ADP-ribose and free acetate. Down-regulates ribonuclease 3 (RNase III) activity. Acts by interacting directly with the region of the ribonuclease that is required for dimerization/activation. This chain is O-acetyl-ADP-ribose deacetylase, found in Klebsiella pneumoniae (strain 342).